A 359-amino-acid polypeptide reads, in one-letter code: Photosystem II protein D1 1 (359 aa).

The next 3 membrane-spanning stretches (helical) occupy residues 29 to 46 (YVGW…AATI), 118 to 133 (HFLI…EWEL), and 142 to 156 (WICV…AASA). H118 serves as a coordination point for chlorophyll a. Y126 contacts pheophytin a. Positions 170 and 189 each coordinate [CaMn4O5] cluster. The helical transmembrane segment at 197–218 (FHMLGVAGVFGGSLFSAMHGSL) threads the bilayer. H198 contacts chlorophyll a. A quinone contacts are provided by residues H215 and 264–265 (SF). H215 lines the Fe cation pocket. H272 contacts Fe cation. The chain crosses the membrane as a helical span at residues 274 to 288 (FLAAWPVVGIWFTAL). Positions 332, 333, 342, and 344 each coordinate [CaMn4O5] cluster. Residues 345 to 359 (AAESTPVALQAPAIG) constitute a propeptide that is removed on maturation.

This sequence belongs to the reaction center PufL/M/PsbA/D family. As to quaternary structure, PSII is composed of 1 copy each of membrane proteins PsbA, PsbB, PsbC, PsbD, PsbE, PsbF, PsbH, PsbI, PsbJ, PsbK, PsbL, PsbM, PsbT, PsbX, PsbY, PsbZ, Psb30/Ycf12, peripheral proteins PsbO, CyanoQ (PsbQ), PsbU, PsbV and a large number of cofactors. It forms dimeric complexes. The D1/D2 heterodimer binds P680, chlorophylls that are the primary electron donor of PSII, and subsequent electron acceptors. It shares a non-heme iron and each subunit binds pheophytin, quinone, additional chlorophylls, carotenoids and lipids. D1 provides most of the ligands for the Mn4-Ca-O5 cluster of the oxygen-evolving complex (OEC). There is also a Cl(-1) ion associated with D1 and D2, which is required for oxygen evolution. The PSII complex binds additional chlorophylls, carotenoids and specific lipids. serves as cofactor. In terms of processing, tyr-161 forms a radical intermediate that is referred to as redox-active TyrZ, YZ or Y-Z. C-terminally processed by CtpA; processing is essential to allow assembly of the oxygen-evolving complex and thus photosynthetic growth.

The protein resides in the cellular thylakoid membrane. It carries out the reaction 2 a plastoquinone + 4 hnu + 2 H2O = 2 a plastoquinol + O2. In terms of biological role, photosystem II (PSII) is a light-driven water:plastoquinone oxidoreductase that uses light energy to abstract electrons from H(2)O, generating O(2) and a proton gradient subsequently used for ATP formation. It consists of a core antenna complex that captures photons, and an electron transfer chain that converts photonic excitation into a charge separation. The D1/D2 (PsbA/PsbD) reaction center heterodimer binds P680, the primary electron donor of PSII as well as several subsequent electron acceptors. The chain is Photosystem II protein D1 1 from Parasynechococcus marenigrum (strain WH8102).